We begin with the raw amino-acid sequence, 427 residues long: MSAIVDIVGREILDSRGNPTVECDVLLESGVMGRAAVPSGASTGSREAIELRDGDKSRYLGKGVLKAVEHINTEISEAVLGLDASEQAFLDRTLIDLDGTDNKSRLGANATLAVSMAVARAAAEEAGLPLYRYFGGSGAMQMPVPMMNVVNGGAHANNNLDLQELMIIPIGAPSFREAVRYGAEVFHALKKILHDKGMSVAVGDEGGFAPNVPSHEAAIQMILEAIDKAGYVAGEQIALGLDCAASEFYKDGKYVLAGEGLSLDATEWTNILATWVDKYPIISIEDGMAEGDWDGWKILTERLGKQVQLVGDDLFVTNTKILKEGIDKHIANSILIKINQIGTLTETFAAIEMAKRAGYTAVISHRSGETEDSTIADIAVGTNAGQIKTGSLSRSDRMAKYNQLLRIEEDLGDIATYPGRAAFYNLR.

A (2R)-2-phosphoglycerate-binding site is contributed by glutamine 163. Glutamate 205 serves as the catalytic Proton donor. Residues aspartate 242, glutamate 285, and aspartate 312 each contribute to the Mg(2+) site. 4 residues coordinate (2R)-2-phosphoglycerate: lysine 337, arginine 366, serine 367, and lysine 388. The active-site Proton acceptor is the lysine 337.

The protein belongs to the enolase family. Mg(2+) serves as cofactor.

Its subcellular location is the cytoplasm. It is found in the secreted. The protein resides in the cell surface. It carries out the reaction (2R)-2-phosphoglycerate = phosphoenolpyruvate + H2O. Its pathway is carbohydrate degradation; glycolysis; pyruvate from D-glyceraldehyde 3-phosphate: step 4/5. Its function is as follows. Catalyzes the reversible conversion of 2-phosphoglycerate (2-PG) into phosphoenolpyruvate (PEP). It is essential for the degradation of carbohydrates via glycolysis. This is Enolase from Polaromonas sp. (strain JS666 / ATCC BAA-500).